The sequence spans 51 residues: Lysis protein for colicin A (51 aa).

The signal sequence occupies residues 1–18 (MKKIIICVILLAIMLLAA). The N-palmitoyl cysteine moiety is linked to residue C19. A lipid anchor (S-diacylglycerol cysteine) is attached at C19. The interval 27–51 (TGGGSVSPSSIVTGVSMGSDGVGNP) is disordered.

Its subcellular location is the cell outer membrane. Its function is as follows. Lysis proteins are required for both colicin release and partial cell lysis. In Citrobacter freundii, this protein is Lysis protein for colicin A (cal).